The primary structure comprises 253 residues: Sporulation initiation inhibitor protein Soj (253 aa).

ATP is bound by residues lysine 11, glycine 12, glycine 13, valine 14, glycine 15, lysine 16, threonine 17, threonine 18, proline 214, and asparagine 216. Threonine 17 lines the Mg(2+) pocket.

Belongs to the ParA family. In terms of assembly, dimerizes in the presence of ATP but not ADP; ATP-binding is required for double-stranded (ds)DNA-binding. Interacts with DnaA.

It localises to the cytoplasm. It catalyses the reaction ATP + H2O = ADP + phosphate + H(+). Its function is as follows. Acts as a spatially regulated molecular switch, capable of either inhibiting or activating the ability of DnaA to initiate DNA replication. Monomeric ADP-Soj inhibits oligomerization of DnaA on single-stranded (ss)- or double-stranded (ds)DNA, thus inhibiting DNA replication initiation; does not disassemble premade DnaA-DNA filaments. Decreases the residence time of DnaA on the chromosome at its binding sites (oriC, replication forks and (probably) promoter-binding sites). Soj forms nucleoprotein filaments in an ATP- and DNA-dependent manner. Inhibits the initiation of sporulation, Spo0J antagonizes this inhibition. Soj ultimately inhibits the activation (phosphorylation) of Spo0A. This is Sporulation initiation inhibitor protein Soj from Bacillus subtilis (strain 168).